Here is a 295-residue protein sequence, read N- to C-terminus: Bifunctional protein FolD (295 aa).

NADP(+)-binding positions include 175-177 (GVS) and isoleucine 243.

It belongs to the tetrahydrofolate dehydrogenase/cyclohydrolase family. As to quaternary structure, homodimer.

The enzyme catalyses (6R)-5,10-methylene-5,6,7,8-tetrahydrofolate + NADP(+) = (6R)-5,10-methenyltetrahydrofolate + NADPH. It carries out the reaction (6R)-5,10-methenyltetrahydrofolate + H2O = (6R)-10-formyltetrahydrofolate + H(+). It participates in one-carbon metabolism; tetrahydrofolate interconversion. Functionally, catalyzes the oxidation of 5,10-methylenetetrahydrofolate to 5,10-methenyltetrahydrofolate and then the hydrolysis of 5,10-methenyltetrahydrofolate to 10-formyltetrahydrofolate. This Xylella fastidiosa (strain 9a5c) protein is Bifunctional protein FolD.